The primary structure comprises 253 residues: GTP cyclohydrolase III 2 (253 aa).

Residues 102-125 (LRDAGSAQDENRQEALSHRSPPGF) are disordered.

The protein belongs to the archaeal-type GTP cyclohydrolase family.

It carries out the reaction GTP + 3 H2O = 2-amino-5-formylamino-6-(5-phospho-D-ribosylamino)pyrimidin-4(3H)-one + 2 phosphate + 2 H(+). Catalyzes the formation of 2-amino-5-formylamino-6-ribofuranosylamino-4(3H)-pyrimidinone ribonucleotide monophosphate and inorganic phosphate from GTP. Also has an independent pyrophosphate phosphohydrolase activity. This is GTP cyclohydrolase III 2 (gch32) from Halobacterium salinarum (strain ATCC 700922 / JCM 11081 / NRC-1) (Halobacterium halobium).